An 885-amino-acid chain; its full sequence is High affinity cAMP-specific and IBMX-insensitive 3',5'-cyclic phosphodiesterase 8B (885 aa).

Disordered stretches follow at residues 18–41 (RDSDESSSPRQTTSVSQGPAAPLP) and 72–95 (TELGSGSSAGSAAPAATTSRGRRR). The segment covering 23–34 (SSSPRQTTSVSQ) has biased composition (polar residues). Positions 75 to 90 (GSGSSAGSAAPAATTS) are enriched in low complexity. The PAS domain maps to 267-338 (ACNSVFTALD…DTINTCIKKG (72 aa)). The tract at residues 393–436 (IHRDSGDNSQTEPHSFRYKNRRKESIDVKSISSRGSDAPSLQNR) is disordered. Positions 422–436 (SISSRGSDAPSLQNR) are enriched in polar residues. Residue Ser-517 is modified to Phosphoserine. The region spanning 539 to 875 (TINDVPPCIS…KHWKTLDDLK (337 aa)) is the PDEase domain. Catalysis depends on His-615, which acts as the Proton donor. Positions 619, 655, and 656 each coordinate a divalent metal cation. A Phosphoserine modification is found at Ser-754. Residue Asp-781 participates in a divalent metal cation binding.

The protein belongs to the cyclic nucleotide phosphodiesterase family. PDE8 subfamily. A divalent metal cation serves as cofactor. In terms of tissue distribution, abundantly expressed in the thyroid. Also very weakly expressed in brain, spinal cord and placenta. In the thyroid isoform 1 predominates, and isoforms 2 and 6 are also highly expressed. In the placenta isoforms 1 and 2 are expressed equally. In the brain isoform 2 predominates.

The catalysed reaction is 3',5'-cyclic AMP + H2O = AMP + H(+). The protein operates within purine metabolism; 3',5'-cyclic AMP degradation; AMP from 3',5'-cyclic AMP: step 1/1. With respect to regulation, inhibited by dipyridimole. Insensitive to selective PDE inhibitors including rolipram and milrinone as well as to the non-selective inhibitor, IBMX. Unaffected by cGMP. Its function is as follows. Hydrolyzes the second messenger cAMP, which is a key regulator of many important physiological processes. May be involved in specific signaling in the thyroid gland. This Homo sapiens (Human) protein is High affinity cAMP-specific and IBMX-insensitive 3',5'-cyclic phosphodiesterase 8B (PDE8B).